Here is a 141-residue protein sequence, read N- to C-terminus: Light-regulated protein 1, chloroplastic (141 aa).

The transit peptide at 1 to 41 (MQGALFIKPTILLPLPSSVSSPKLTFLLPHATKASRLSSLR) directs the protein to the chloroplast. Positions 35–51 (SRLSSLRSNNSSSSSSL) are enriched in low complexity. Residues 35 to 58 (SRLSSLRSNNSSSSSSLTSDPNTV) are disordered. Residues 58–132 (VDYNSSILSV…ACDDLGGEFC (75 aa)) form a 2 X 15 AA approximate repeats region. Repeat copies occupy residues 67-81 (VFPA…GYAC) and 118-132 (VFRE…GEFC).

Component of high molecular weight thylakoid LFNRs-containing protein complexes containing LIR1, LFNR1, LFNR2, TIC62 and TROL proteins. Interacts directly with LFNR1 and LFNR2; LIR1 increases the affinity of LFNR1 and LFNR2 for TIC62 and subsequent thylakoid relocalization. May form interchain disulfide bonds with LFNR1 and LFNR2.

It is found in the plastid. It localises to the chloroplast thylakoid membrane. The protein localises to the chloroplast envelope. Its subcellular location is the chloroplast stroma. Thylakoid-determinant subunit of high molecular weight LFNRs-containing protein complexes. The chain is Light-regulated protein 1, chloroplastic from Arabidopsis thaliana (Mouse-ear cress).